A 25-amino-acid chain; its full sequence is Small ribosomal subunit protein eS32 (25 aa).

The disordered stretch occupies residues 1 to 25 (MRDKWRKKRVRRLKRKRRKVRARSK).

The protein belongs to the eukaryotic ribosomal protein eS32 family. As to quaternary structure, component of the small ribosomal subunit. Mature ribosomes consist of a small (40S) and a large (60S) subunit. The 40S subunit contains about 32 different proteins and 1 molecule of RNA (18S). The 60S subunit contains 45 different proteins and 3 molecules of RNA (25S, 5.8S and 5S).

It localises to the cytoplasm. In terms of biological role, component of the ribosome, a large ribonucleoprotein complex responsible for the synthesis of proteins in the cell. The small ribosomal subunit (SSU) binds messenger RNAs (mRNAs) and translates the encoded message by selecting cognate aminoacyl-transfer RNA (tRNA) molecules. The large subunit (LSU) contains the ribosomal catalytic site termed the peptidyl transferase center (PTC), which catalyzes the formation of peptide bonds, thereby polymerizing the amino acids delivered by tRNAs into a polypeptide chain. The nascent polypeptides leave the ribosome through a tunnel in the LSU and interact with protein factors that function in enzymatic processing, targeting, and the membrane insertion of nascent chains at the exit of the ribosomal tunnel. The chain is Small ribosomal subunit protein eS32 from Candida albicans (strain SC5314 / ATCC MYA-2876) (Yeast).